The sequence spans 448 residues: Probable ribonuclease FAU-1 (448 aa).

The protein belongs to the FAU-1 family.

Its function is as follows. Probable RNase involved in rRNA stability through maturation and/or degradation of precursor rRNAs. Binds to RNA in loop regions with AU-rich sequences. The polypeptide is Probable ribonuclease FAU-1 (Pyrobaculum calidifontis (strain DSM 21063 / JCM 11548 / VA1)).